The chain runs to 189 residues: MTVGLLGGSFDPPHEGHVQISRAALKRFDLDQLWWLVTPGNPLKENPPASMTRRIKAAREIMDHPRVRISDIEARLNTRYTAQTLRELRKLYPQVRFVWLMGADNLAHFHRWKNWRGIMESVPVGVLARPGDRISARLSRAARIYSQHRIPAGQSHLLARASSPAWCFLNVPMTKASSTEIRKRGAWTG.

This sequence belongs to the NadD family.

It carries out the reaction nicotinate beta-D-ribonucleotide + ATP + H(+) = deamido-NAD(+) + diphosphate. Its pathway is cofactor biosynthesis; NAD(+) biosynthesis; deamido-NAD(+) from nicotinate D-ribonucleotide: step 1/1. In terms of biological role, catalyzes the reversible adenylation of nicotinate mononucleotide (NaMN) to nicotinic acid adenine dinucleotide (NaAD). In Ruegeria sp. (strain TM1040) (Silicibacter sp.), this protein is Probable nicotinate-nucleotide adenylyltransferase.